The following is a 134-amino-acid chain: MATFFLEVLTPDRKFFSGEAECVIFKSSDGEMGVLAKHAPTVSAVSVGPLRINAQGKWIEAVVTEGFAKIMPDKVVILTDTAEYPEEIDINRAKAAKQRAEERLQKKLSQLEYMRSKTALARAMARLSATNRRR.

It belongs to the ATPase epsilon chain family. F-type ATPases have 2 components, CF(1) - the catalytic core - and CF(0) - the membrane proton channel. CF(1) has five subunits: alpha(3), beta(3), gamma(1), delta(1), epsilon(1). CF(0) has three main subunits: a, b and c.

The protein resides in the cell membrane. In terms of biological role, produces ATP from ADP in the presence of a proton gradient across the membrane. This is ATP synthase epsilon chain from Ruminiclostridium cellulolyticum (strain ATCC 35319 / DSM 5812 / JCM 6584 / H10) (Clostridium cellulolyticum).